The following is a 185-amino-acid chain: MRKDAIENRQRIEEIAHKLFDEEGVENISMNRIAKELGIGMGTLYRHFKDKSDLCFYVIQRDLNTFITQFKQIKDDYHSDYEVMKVSLDYLLQFKIDNKTLLHCIEAGNNKLRFYQSAFYQELFDFYYDLFKSDDDIFTKFKTDMLLQSLSTSVFAFQIEHRHISIEAYRNYLLNIYLDEVERND.

Residues 6-66 enclose the HTH tetR-type domain; sequence IENRQRIEEI…YVIQRDLNTF (61 aa). The H-T-H motif DNA-binding region spans 29 to 48; sequence SMNRIAKELGIGMGTLYRHF.

The sequence is that of HTH-type transcriptional regulator SAB2452 from Staphylococcus aureus (strain bovine RF122 / ET3-1).